A 251-amino-acid chain; its full sequence is 5-oxoprolinase subunit A 2 (251 aa).

Belongs to the LamB/PxpA family. As to quaternary structure, forms a complex composed of PxpA, PxpB and PxpC.

It catalyses the reaction 5-oxo-L-proline + ATP + 2 H2O = L-glutamate + ADP + phosphate + H(+). Its function is as follows. Catalyzes the cleavage of 5-oxoproline to form L-glutamate coupled to the hydrolysis of ATP to ADP and inorganic phosphate. The sequence is that of 5-oxoprolinase subunit A 2 from Pseudomonas syringae pv. tomato (strain ATCC BAA-871 / DC3000).